A 689-amino-acid chain; its full sequence is Glycine--tRNA ligase beta subunit (689 aa).

The protein belongs to the class-II aminoacyl-tRNA synthetase family. Tetramer of two alpha and two beta subunits.

It is found in the cytoplasm. It carries out the reaction tRNA(Gly) + glycine + ATP = glycyl-tRNA(Gly) + AMP + diphosphate. In Escherichia coli O7:K1 (strain IAI39 / ExPEC), this protein is Glycine--tRNA ligase beta subunit.